Consider the following 397-residue polypeptide: uncharacterized protein (397 aa).

9 helical membrane-spanning segments follow: residues 1–21 (MGASGLVWTLTIVLIAGLMLV), 39–59 (VIQSATFVGIAILFGIAVVVF), 76–96 (EALSVDNLFVFLVIISSFGVP), 103–123 (VLLFGIAFALVTRTGFIFVGA), 124–144 (ALIENFNSAFYLFGLVLLVMA), 194–214 (MMTPLLLVMIAVGGTDILFAF), 219–239 (ALFGLTQNVYLVFAATAFSLL), 255–275 (LVYLSYGLAVILGFIGVKLML), and 301–321 (QSLTVIIIVLLITTAASFWSA).

Belongs to the TerC family.

It localises to the cell membrane. This is an uncharacterized protein from Mycobacterium bovis (strain ATCC BAA-935 / AF2122/97).